The primary structure comprises 60 residues: Small ribosomal subunit protein eS31 (60 aa).

Zn(2+) is bound by residues Cys32, Cys35, Cys50, and Cys53. The C4-type zinc-finger motif lies at 32-53 (CPRCGAGVFMGEHKDRFSCGKC).

Belongs to the eukaryotic ribosomal protein eS31 family. As to quaternary structure, part of the 30S ribosomal subunit. Zn(2+) is required as a cofactor.

This chain is Small ribosomal subunit protein eS31, found in Methanocorpusculum labreanum (strain ATCC 43576 / DSM 4855 / Z).